We begin with the raw amino-acid sequence, 382 residues long: Sphingoid long-chain base transporter RSB1 (382 aa).

Residues 1-34 (MSNATNNTLGSLLPQLEAAANSNSLYGGMVPNLR) lie on the Extracellular side of the membrane. N-linked (GlcNAc...) asparagine glycosylation is found at asparagine 3 and asparagine 6. Residues 35–55 (FNITMIVIWGILLTIHVVQLL) form a helical membrane-spanning segment. The Cytoplasmic segment spans residues 56–57 (MR). Residues 58 to 78 (QYWFSIAFICTGILEVLGFIG) form a helical membrane-spanning segment. Residues 79 to 90 (RTWSHSNVADMD) are Extracellular-facing. A helical transmembrane segment spans residues 91–111 (AFLLNMICLTIAPVFTMGGIY). At 112–135 (YQLAKLIEVYGHRFSLLPSPMAYS) the chain is on the cytoplasmic side. A helical transmembrane segment spans residues 136 to 156 (FIFICSDIVSLVVQAVGGGLC). The Extracellular portion of the chain corresponds to 157–171 (GVAVTDGTSTTTGNH). The chain crosses the membrane as a helical span at residues 172 to 192 (VFIAGLAIQVASMAIFLMLWF). Over 193–241 (HFLFRIYISVRWEHINSRPISLSLLKISQTEVDYLYREKFHFLRLEPKR) the chain is Cytoplasmic. The chain crosses the membrane as a helical span at residues 242–262 (WVFHYFNLAMTVAVLTIFTRC). At 263–281 (CYRLAELVVGWDGYLITHE) the chain is on the extracellular side. A helical transmembrane segment spans residues 282 to 302 (WYFIILDALMMAIATVTLTIF). Residues 303–382 (HPGFAFKGRS…LFSSKKKAKL (80 aa)) are Cytoplasmic-facing.

This sequence belongs to the lipid-translocating exporter (LTE) (TC 9.A.26.1) family.

It is found in the cell membrane. Its function is as follows. Catalyzes the ATP-dependent translocation of sphingoid long-chain bases (LCBs) from the cytoplasmic site toward the extracytoplasmic side of the membrane (flip-flop). Involved in the establishment of the functional lipid asymmetry of the plasma membrane. Regulates intracellular levels of LCBs, sphingolipid precursors that are growth inhibitory at increased levels. This Saccharomyces cerevisiae (strain RM11-1a) (Baker's yeast) protein is Sphingoid long-chain base transporter RSB1 (RSB1).